We begin with the raw amino-acid sequence, 265 residues long: Ribosomal RNA large subunit methyltransferase E (265 aa).

5 residues coordinate S-adenosyl-L-methionine: glycine 83, tryptophan 85, aspartate 106, aspartate 122, and aspartate 146. The Proton acceptor role is filled by lysine 186. Positions 230 to 265 (KGREAGPPSGGSERPVDVSKDLSARSDSEGPGDAEG) are disordered. The segment covering 243–257 (RPVDVSKDLSARSDS) has biased composition (basic and acidic residues).

This sequence belongs to the class I-like SAM-binding methyltransferase superfamily. RNA methyltransferase RlmE family.

Its subcellular location is the cytoplasm. It carries out the reaction uridine(2552) in 23S rRNA + S-adenosyl-L-methionine = 2'-O-methyluridine(2552) in 23S rRNA + S-adenosyl-L-homocysteine + H(+). In terms of biological role, specifically methylates the uridine in position 2552 of 23S rRNA at the 2'-O position of the ribose in the fully assembled 50S ribosomal subunit. The polypeptide is Ribosomal RNA large subunit methyltransferase E (Mesorhizobium japonicum (strain LMG 29417 / CECT 9101 / MAFF 303099) (Mesorhizobium loti (strain MAFF 303099))).